A 363-amino-acid polypeptide reads, in one-letter code: NAD(P)H-quinone oxidoreductase subunit 1, chloroplastic (363 aa).

The next 8 helical transmembrane spans lie at 26 to 46, 96 to 116, 127 to 147, 175 to 195, 203 to 223, 253 to 273, 303 to 323, and 343 to 363; these read FVWICVPIVVLILGITLGVLV, WLFALGPAIVVIPVLLSFLVI, ISIGMFFWIAVSSVAPVGLLV, LALCVLSVVLMSNSLSTIEIV, ILGWNIWRQPVGFIAFVISAL, FGLFYVASYLNLFASSLFVTI, GLIAFAITLSKAYLFLFASIL, and FLLPVALGNLLLTASFELALL.

The protein belongs to the complex I subunit 1 family. In terms of assembly, NDH is composed of at least 16 different subunits, 5 of which are encoded in the nucleus.

The protein resides in the plastid. It localises to the chloroplast thylakoid membrane. The enzyme catalyses a plastoquinone + NADH + (n+1) H(+)(in) = a plastoquinol + NAD(+) + n H(+)(out). The catalysed reaction is a plastoquinone + NADPH + (n+1) H(+)(in) = a plastoquinol + NADP(+) + n H(+)(out). NDH shuttles electrons from NAD(P)H:plastoquinone, via FMN and iron-sulfur (Fe-S) centers, to quinones in the photosynthetic chain and possibly in a chloroplast respiratory chain. The immediate electron acceptor for the enzyme in this species is believed to be plastoquinone. Couples the redox reaction to proton translocation, and thus conserves the redox energy in a proton gradient. The protein is NAD(P)H-quinone oxidoreductase subunit 1, chloroplastic of Zygnema circumcarinatum (Green alga).